Consider the following 227-residue polypeptide: Orotidine 5'-phosphate decarboxylase (227 aa).

Residues Asp-8, Lys-30, Asp-59 to Thr-68, Thr-118, Arg-178, Gln-187, Gly-207, and Arg-208 contribute to the substrate site. Lys-61 (proton donor) is an active-site residue.

The protein belongs to the OMP decarboxylase family. Type 1 subfamily. Homodimer.

The catalysed reaction is orotidine 5'-phosphate + H(+) = UMP + CO2. The protein operates within pyrimidine metabolism; UMP biosynthesis via de novo pathway; UMP from orotate: step 2/2. Catalyzes the decarboxylation of orotidine 5'-monophosphate (OMP) to uridine 5'-monophosphate (UMP). The protein is Orotidine 5'-phosphate decarboxylase of Helicobacter pylori (strain Shi470).